Consider the following 51-residue polypeptide: Insulin (51 aa).

Intrachain disulfides connect C7-C37, C19-C50, and C36-C41.

This sequence belongs to the insulin family. As to quaternary structure, heterodimer of a B chain and an A chain linked by two disulfide bonds.

The protein localises to the secreted. Its function is as follows. Insulin decreases blood glucose concentration. It increases cell permeability to monosaccharides, amino acids and fatty acids. It accelerates glycolysis, the pentose phosphate cycle, and glycogen synthesis in liver. In Camelus dromedarius (Dromedary), this protein is Insulin (INS).